The sequence spans 265 residues: Transcriptional activator TAF-1 (265 aa).

2 disordered regions span residues 1-133 and 167-218; these read AHGG…SEKA and THLK…KQAE. The span at 35–46 shows a compositional bias: low complexity; that stretch reads ASLSLDASAKSS. Basic and acidic residues-rich tracts occupy residues 103-115 and 191-209; these read RETT…DSKS and NERE…ESAR. Residues 194 to 257 form the bZIP domain; that stretch reads ELKREKRKQS…EKLKLENAAL (64 aa). Residues 196–215 are basic motif; it reads KREKRKQSNRESARRSRLRK. The tract at residues 222–257 is leucine-zipper; it reads LAIRVQSLTAENMTLKSEINKLMENSEKLKLENAAL.

Belongs to the bZIP family. In terms of tissue distribution, present mainly in roots. Barely detectable in stems and leaves.

Its subcellular location is the nucleus. In terms of biological role, trans-activator of a beta-glucuronidase (GUS) reporter gene. Binds to a G-box-related element, (5'-GCAACGTGGC-3'). Also binds to the HEX-motif of wheat histone H3 promoter. The chain is Transcriptional activator TAF-1 (TAF1) from Nicotiana tabacum (Common tobacco).